A 364-amino-acid chain; its full sequence is Guanine nucleotide-binding protein alpha-8 subunit (364 aa).

Glycine 2 carries N-myristoyl glycine lipidation. Cysteine 5 is lipidated: S-palmitoyl cysteine. The G-alpha domain occupies 38–364 (KILKLLILGP…QHTMQKVGIQ (327 aa)). Positions 41 to 54 (KLLILGPGESGKST) are G1 motif. Residues 46–53 (GPGESGKS), 186–192 (LKSRVPT), 211–215 (DVGGQ), 280–283 (NKID), and alanine 336 contribute to the GTP site. Positions 53 and 192 each coordinate Mg(2+). The tract at residues 184–192 (DILKSRVPT) is G2 motif. The segment at 207 to 216 (FKIFDVGGQR) is G3 motif. The G4 motif stretch occupies residues 276–283 (ILFLNKID). Residues 334–339 (TCATDT) are G5 motif.

This sequence belongs to the G-alpha family. In terms of assembly, g proteins are composed of 3 units; alpha, beta and gamma. The alpha chain contains the guanine nucleotide binding site.

Its function is as follows. Guanine nucleotide-binding proteins (G proteins) are involved as modulators or transducers in various transmembrane signaling systems. This Caenorhabditis briggsae protein is Guanine nucleotide-binding protein alpha-8 subunit (gpa-8).